Consider the following 413-residue polypeptide: Multifunctional CCA protein (413 aa).

Positions 8 and 11 each coordinate ATP. CTP is bound by residues glycine 8 and arginine 11. Aspartate 21 and aspartate 23 together coordinate Mg(2+). ATP contacts are provided by arginine 91, arginine 137, and arginine 140. 3 residues coordinate CTP: arginine 91, arginine 137, and arginine 140. The 102-residue stretch at 228-329 folds into the HD domain; sequence TGKHTLLSLK…VSLFDKGDFW (102 aa).

This sequence belongs to the tRNA nucleotidyltransferase/poly(A) polymerase family. Bacterial CCA-adding enzyme type 1 subfamily. Monomer. Can also form homodimers and oligomers. Mg(2+) serves as cofactor. It depends on Ni(2+) as a cofactor.

The catalysed reaction is a tRNA precursor + 2 CTP + ATP = a tRNA with a 3' CCA end + 3 diphosphate. It carries out the reaction a tRNA with a 3' CCA end + 2 CTP + ATP = a tRNA with a 3' CCACCA end + 3 diphosphate. In terms of biological role, catalyzes the addition and repair of the essential 3'-terminal CCA sequence in tRNAs without using a nucleic acid template. Adds these three nucleotides in the order of C, C, and A to the tRNA nucleotide-73, using CTP and ATP as substrates and producing inorganic pyrophosphate. tRNA 3'-terminal CCA addition is required both for tRNA processing and repair. Also involved in tRNA surveillance by mediating tandem CCA addition to generate a CCACCA at the 3' terminus of unstable tRNAs. While stable tRNAs receive only 3'-terminal CCA, unstable tRNAs are marked with CCACCA and rapidly degraded. In Shewanella denitrificans (strain OS217 / ATCC BAA-1090 / DSM 15013), this protein is Multifunctional CCA protein.